The sequence spans 200 residues: MSRVFSCVLRACVCAGLCCWVCMGVICGDCQRWWRRRCARWGRVGPRVLDGGAWRVRSGDGARSVSRTCETERAPSAARSPVYSPPFVLVSSSSSSSCSSACSSRVPSPPPSPHAASHAVCAEGGRDLPMHGADGDADEGTDGTLLEKGGADEGAGGNATGCPEDTHGFARSPGDLMGEMNGDLGDEGETGEGGDNGEGE.

Positions 1-24 are cleaved as a signal peptide; that stretch reads MSRVFSCVLRACVCAGLCCWVCMG. The tract at residues 124-200 is disordered; the sequence is GGRDLPMHGA…GEGGDNGEGE (77 aa). Residues 184-200 show a composition bias toward acidic residues; that stretch reads LGDEGETGEGGDNGEGE.

This is an uncharacterized protein from Homo sapiens (Human).